The sequence spans 23 residues: ACVPVYEECGTPKKRCCEERPCK.

2 disulfide bridges follow: cysteine 2–cysteine 17 and cysteine 9–cysteine 22.

In terms of tissue distribution, expressed by the venom gland.

It localises to the secreted. Antagonist of L-type calcium channels (Cav1/CACNA1). The sequence is that of U3-ctenitoxin-Co1a from Ctenus ornatus (Brazilian spider).